The following is a 294-amino-acid chain: Energy-coupling factor transporter ATP-binding protein EcfA1 (294 aa).

One can recognise an ABC transporter domain in the interval 27 to 260 (IEFENVYFAY…EERLLKMQLD (234 aa)). An ATP-binding site is contributed by 60–67 (GHNGSGKS).

Belongs to the ABC transporter superfamily. Energy-coupling factor EcfA family. As to quaternary structure, forms a stable energy-coupling factor (ECF) transporter complex composed of 2 membrane-embedded substrate-binding proteins (S component), 2 ATP-binding proteins (A component) and 2 transmembrane proteins (T component).

Its subcellular location is the cell membrane. ATP-binding (A) component of a common energy-coupling factor (ECF) ABC-transporter complex. Unlike classic ABC transporters this ECF transporter provides the energy necessary to transport a number of different substrates. In Ureaplasma parvum serovar 3 (strain ATCC 700970), this protein is Energy-coupling factor transporter ATP-binding protein EcfA1.